The chain runs to 378 residues: 8-demethyl-8-alpha-L-rhamnosyl tetracenomycin-C 2'-O-methyltransferase (378 aa).

S-adenosyl-L-methionine is bound by residues 195-201 (EIGVGGY), S210, D227, 245-246 (DQ), and D268. D268 serves as a coordination point for Mg(2+). H271 acts as the Proton acceptor in catalysis. 2 residues coordinate Mg(2+): E296 and D297.

The protein belongs to the methyltransferase OleY/MycE family. It depends on Mg(2+) as a cofactor.

It catalyses the reaction 8-demethyl-8-alpha-L-rhamnosyl-tetracenomycin C + S-adenosyl-L-methionine = 8-demethyl-8-(2-O-methyl-alpha-L-rhamnosyl)-tetracenomycin C + S-adenosyl-L-homocysteine + H(+). It participates in antibiotic biosynthesis. O-methyltransferase involved in the biosynthesis of the permethylated L-rhamnose moiety of elloramycin, an antitumor polyketide. Mediates the methylation of the hydroxy groups at the 2'-position after the sugar moiety has been attached to the aglycon. This Streptomyces olivaceus protein is 8-demethyl-8-alpha-L-rhamnosyl tetracenomycin-C 2'-O-methyltransferase.